The primary structure comprises 486 residues: MSVTSTSLNGTFNGISEDGIEIFKGIKYANIPYRWAYAERIDDYDNGVFDCTQEGMACPQVLPFDYNIEKGPKEMPFDEFECSNLMITRPQGATNLPVFVWIHGGGNLAGNGYCSDHNPVPFVKHSIVAGRPVLHVMIEYRLSAFGYLAVPDTNGNWVGNWGARDQYTALQWISKHIVEFGGDPSQITIGGESAGSIGLHALMVHESMKPKEECIIHNVILSSGTMDRMGTGTISENAFKPIYDGIKTLVGDINTCSADELLEAQIKAGLDLGFYLQDDFFPPDWRNVRFKVSRVLLSDVIVDGTNFKNKINPAVRVTPENDFDHKVFKLYNISTEDTWEDYHYKMMLFKGDETFIRGNQQLELLFEQENIPVWRQLFDQIHPNDPSRLCHHAVDLYYMWDNWEMPEDKHAVARQYQDTLTKFVYGQDPWPVDKLHYVHDNQFEILDKSQFGDFRNVPALKFLLGFSAEELGELTKKYTGEGHYTL.

The cysteines at positions 58 and 82 are disulfide-linked. Ser-193 (acyl-ester intermediate) is an active-site residue. Asp-303 (charge relay system) is an active-site residue. Asn-332 carries N-linked (GlcNAc...) asparagine glycosylation. Catalysis depends on His-392, which acts as the Charge relay system.

This sequence belongs to the type-B carboxylesterase/lipase family.

The enzyme catalyses a triacylglycerol + H2O = a diacylglycerol + a fatty acid + H(+). The protein is Lipase 1 (LIP1) of Yarrowia lipolytica (strain CLIB 122 / E 150) (Yeast).